The sequence spans 231 residues: Phosphoglycolate phosphatase (231 aa).

The Nucleophile role is filled by Asp9. 2 residues coordinate Mg(2+): Asp9 and Asp11. Lys154 serves as a coordination point for substrate. Asp177 and Asp181 together coordinate Mg(2+).

The protein belongs to the archaeal SPP-like hydrolase family. Requires Mg(2+) as cofactor.

It carries out the reaction 2-phosphoglycolate + H2O = glycolate + phosphate. Its function is as follows. Catalyzes the dephosphorylation of 2-phosphoglycolate. The protein is Phosphoglycolate phosphatase of Nitrosopumilus maritimus (strain SCM1).